Reading from the N-terminus, the 250-residue chain is 5-oxoprolinase subunit A (250 aa).

Belongs to the LamB/PxpA family. Forms a complex composed of PxpA, PxpB and PxpC.

It carries out the reaction 5-oxo-L-proline + ATP + 2 H2O = L-glutamate + ADP + phosphate + H(+). In terms of biological role, catalyzes the cleavage of 5-oxoproline to form L-glutamate coupled to the hydrolysis of ATP to ADP and inorganic phosphate. The chain is 5-oxoprolinase subunit A from Klebsiella pneumoniae (strain 342).